Consider the following 154-residue polypeptide: MAARMLGLCGRRLLAVAATRGLPAARVRWESSSSRAVIAPSTLAGKRPSEPTLRWQEDPEPEDENLYEKNPDSHGYDKDPAVDIWNMRVVFFFGFSIVLVLGSTFVAYLPDYRMQEWARREAERLVKYREAHGLPIMESNCFDPSKIQLPEDED.

The transit peptide at 1–29 (MAARMLGLCGRRLLAVAATRGLPAARVRW) directs the protein to the mitochondrion. Positions 40–77 (PSTLAGKRPSEPTLRWQEDPEPEDENLYEKNPDSHGYD) are disordered. Residues 66 to 77 (LYEKNPDSHGYD) show a composition bias toward basic and acidic residues. The helical transmembrane segment at 89-109 (VVFFFGFSIVLVLGSTFVAYL) threads the bilayer.

Belongs to the complex I NDUFB11 subunit family. As to quaternary structure, complex I is composed of 45 different subunits. Interacts with BCAP31.

Its subcellular location is the mitochondrion inner membrane. Its function is as follows. Accessory subunit of the mitochondrial membrane respiratory chain NADH dehydrogenase (Complex I), that is believed not to be involved in catalysis. Complex I functions in the transfer of electrons from NADH to the respiratory chain. The immediate electron acceptor for the enzyme is believed to be ubiquinone. The chain is NADH dehydrogenase [ubiquinone] 1 beta subcomplex subunit 11, mitochondrial (NDUFB11) from Bos taurus (Bovine).